Reading from the N-terminus, the 378-residue chain is Erythronate-4-phosphate dehydrogenase (378 aa).

S45 and T66 together coordinate substrate. D146 and T175 together coordinate NAD(+). The active site involves R208. Position 232 (D232) interacts with NAD(+). E237 is a catalytic residue. The active-site Proton donor is the H254. An NAD(+)-binding site is contributed by G257. Y258 is a substrate binding site.

This sequence belongs to the D-isomer specific 2-hydroxyacid dehydrogenase family. PdxB subfamily. Homodimer.

It is found in the cytoplasm. It carries out the reaction 4-phospho-D-erythronate + NAD(+) = (R)-3-hydroxy-2-oxo-4-phosphooxybutanoate + NADH + H(+). The protein operates within cofactor biosynthesis; pyridoxine 5'-phosphate biosynthesis; pyridoxine 5'-phosphate from D-erythrose 4-phosphate: step 2/5. Catalyzes the oxidation of erythronate-4-phosphate to 3-hydroxy-2-oxo-4-phosphonooxybutanoate. This is Erythronate-4-phosphate dehydrogenase from Cronobacter sakazakii (strain ATCC BAA-894) (Enterobacter sakazakii).